The sequence spans 142 residues: Large ribosomal subunit protein mL43 (142 aa).

The protein belongs to the mitochondrion-specific ribosomal protein mL43 family. As to quaternary structure, component of the mitochondrial large ribosomal subunit. Mature mitochondrial ribosomes consist of a small (37S) and a large (54S) subunit. The 37S subunit contains at least 33 different proteins and 1 molecule of RNA (15S). The 54S subunit contains at least 45 different proteins and 1 molecule of RNA (21S).

Its subcellular location is the mitochondrion. The polypeptide is Large ribosomal subunit protein mL43 (MRPL51) (Eremothecium gossypii (strain ATCC 10895 / CBS 109.51 / FGSC 9923 / NRRL Y-1056) (Yeast)).